A 169-amino-acid chain; its full sequence is Protein-export protein SecB (169 aa).

It belongs to the SecB family. In terms of assembly, homotetramer, a dimer of dimers. One homotetramer interacts with 1 SecA dimer.

The protein localises to the cytoplasm. Functionally, one of the proteins required for the normal export of preproteins out of the cell cytoplasm. It is a molecular chaperone that binds to a subset of precursor proteins, maintaining them in a translocation-competent state. It also specifically binds to its receptor SecA. This is Protein-export protein SecB from Haemophilus influenzae (strain 86-028NP).